The following is a 133-amino-acid chain: Protein NrdI (133 aa).

This sequence belongs to the NrdI family.

Probably involved in ribonucleotide reductase function. This chain is Protein NrdI, found in Escherichia coli O17:K52:H18 (strain UMN026 / ExPEC).